The primary structure comprises 36 residues: U1-ectatotoxin-Et1b subunit B (36 aa).

Cysteines 11 and 33 form a disulfide.

Belongs to the ectatomin family. Ectatomin-Et subfamily. In terms of assembly, heterodimer of subunits A and B; disulfide-linked. In terms of tissue distribution, expressed by the venom gland.

Its subcellular location is the secreted. The protein localises to the target cell membrane. This chain is U1-ectatotoxin-Et1b subunit B, found in Ectatomma tuberculatum (Selva ant).